A 420-amino-acid chain; its full sequence is UDP-N-acetylglucosamine 1-carboxyvinyltransferase (420 aa).

A phosphoenolpyruvate-binding site is contributed by 22–23; the sequence is KN. Arg-93 contributes to the UDP-N-acetyl-alpha-D-glucosamine binding site. Cys-117 serves as the catalytic Proton donor. Cys-117 carries the post-translational modification 2-(S-cysteinyl)pyruvic acid O-phosphothioketal. The UDP-N-acetyl-alpha-D-glucosamine site is built by Asp-307 and Ile-329.

This sequence belongs to the EPSP synthase family. MurA subfamily.

It localises to the cytoplasm. The enzyme catalyses phosphoenolpyruvate + UDP-N-acetyl-alpha-D-glucosamine = UDP-N-acetyl-3-O-(1-carboxyvinyl)-alpha-D-glucosamine + phosphate. It functions in the pathway cell wall biogenesis; peptidoglycan biosynthesis. In terms of biological role, cell wall formation. Adds enolpyruvyl to UDP-N-acetylglucosamine. The polypeptide is UDP-N-acetylglucosamine 1-carboxyvinyltransferase (Saccharophagus degradans (strain 2-40 / ATCC 43961 / DSM 17024)).